The sequence spans 509 residues: Dihydrolipoyl dehydrogenase, mitochondrial (509 aa).

The transit peptide at 1 to 35 directs the protein to the mitochondrion; that stretch reads MQSWSRVYRSLAKKGHFNRISHGLQGVSSVPLRTY. An N6-acetyllysine; alternate modification is found at Lys-66. Lys-66 is subject to N6-succinyllysine; alternate. FAD contacts are provided by residues 71–80 and Lys-89; that span reads EKNETLGGTC. A disulfide bridge links Cys-80 with Cys-85. An N6-acetyllysine; alternate mark is found at Lys-104, Lys-122, Lys-132, and Lys-143. N6-succinyllysine; alternate is present on residues Lys-104, Lys-122, Lys-132, and Lys-143. Gly-154 serves as a coordination point for FAD. N6-succinyllysine occurs at positions 159 and 166. 183–185 contacts FAD; that stretch reads TGS. NAD(+) contacts are provided by residues 220-227 and Glu-243; that span reads GAGVIGVE. Residues Lys-273 and Lys-277 each carry the N6-succinyllysine modification. Val-278 is an NAD(+) binding site. Phosphoserine occurs at positions 285 and 297. Gly-314 lines the NAD(+) pocket. Lys-334 is modified (N6-acetyllysine; alternate). Position 334 is an N6-succinyllysine; alternate (Lys-334). Residue Lys-346 is modified to N6-acetyllysine. Residues Asp-355 and 361–364 contribute to the FAD site; that span reads MLAH. Lys-410 carries the post-translational modification N6-acetyllysine; alternate. Residue Lys-410 is modified to N6-succinyllysine; alternate. N6-acetyllysine occurs at positions 417 and 420. Lys-430 carries the post-translational modification N6-succinyllysine. The Proton acceptor role is filled by His-487. Position 505 is an N6-acetyllysine; alternate (Lys-505). N6-succinyllysine; alternate is present on Lys-505.

It belongs to the class-I pyridine nucleotide-disulfide oxidoreductase family. In terms of assembly, homodimer. Part of the multimeric pyruvate dehydrogenase complex that contains multiple copies of pyruvate dehydrogenase (subunits PDHA (PDHA1 or PDHA2) and PDHB, E1), dihydrolipoamide acetyltransferase (DLAT, E2) and lipoamide dehydrogenase (DLD, E3). These subunits are bound to an inner core composed of about 48 DLAT and 12 PDHX molecules (by non covalent bonds). The 2-oxoglutarate dehydrogenase complex is composed of OGDH (2-oxoglutarate dehydrogenase; E1), DLST (dihydrolipoamide succinyltransferase; E2), DLD (dihydrolipoamide dehydrogenase; E3) and the assembly factor KGD4. It contains multiple copies of the three enzymatic components (E1, E2 and E3). In the nucleus, the 2-oxoglutarate dehydrogenase complex associates with KAT2A. Interacts with PDHX. FAD serves as cofactor. Tyrosine phosphorylated. Expressed in liver (at protein level).

Its subcellular location is the mitochondrion matrix. It localises to the nucleus. The protein resides in the cell projection. The protein localises to the cilium. It is found in the flagellum. Its subcellular location is the cytoplasmic vesicle. It localises to the secretory vesicle. The protein resides in the acrosome. It carries out the reaction N(6)-[(R)-dihydrolipoyl]-L-lysyl-[protein] + NAD(+) = N(6)-[(R)-lipoyl]-L-lysyl-[protein] + NADH + H(+). Its function is as follows. Lipoamide dehydrogenase is a component of the glycine cleavage system as well as an E3 component of three alpha-ketoacid dehydrogenase complexes (pyruvate-, alpha-ketoglutarate-, and branched-chain amino acid-dehydrogenase complex). The 2-oxoglutarate dehydrogenase complex is mainly active in the mitochondrion. A fraction of the 2-oxoglutarate dehydrogenase complex also localizes in the nucleus and is required for lysine succinylation of histones: associates with KAT2A on chromatin and provides succinyl-CoA to histone succinyltransferase KAT2A. In monomeric form may have additional moonlighting function as serine protease. Involved in the hyperactivation of spermatazoa during capacitation and in the spermatazoal acrosome reaction. The chain is Dihydrolipoyl dehydrogenase, mitochondrial (Dld) from Mus musculus (Mouse).